The chain runs to 224 residues: Peptidyl-prolyl cis-trans isomerase FKBP3 (224 aa).

Alanine 2 carries the N-acetylalanine modification. Serine 36 bears the Phosphoserine mark. Residues 88–118 (VKLSDDKPKDSKSEETLDEGPPKYTKSILKK) are disordered. The span at 89–102 (KLSDDKPKDSKSEE) shows a compositional bias: basic and acidic residues. The residue at position 99 (lysine 99) is an N6-acetyllysine. Residues 128–224 (GDVVHCWYTG…IFEVELVDID (97 aa)) enclose the PPIase FKBP-type domain. Phosphoserine is present on serine 152. Lysine 170 is subject to N6-acetyllysine.

The protein belongs to the FKBP-type PPIase family.

Its subcellular location is the nucleus. The catalysed reaction is [protein]-peptidylproline (omega=180) = [protein]-peptidylproline (omega=0). Inhibited preferentially by rapamycin over FK506. In terms of biological role, FK506- and rapamycin-binding proteins (FKBPs) constitute a family of receptors for the two immunosuppressants which inhibit T-cell proliferation by arresting two distinct cytoplasmic signal transmission pathways. PPIases accelerate the folding of proteins. This chain is Peptidyl-prolyl cis-trans isomerase FKBP3 (Fkbp3), found in Mus musculus (Mouse).